We begin with the raw amino-acid sequence, 1306 residues long: DNA-directed RNA polymerase subunit beta' (1306 aa).

Zn(2+) is bound by residues C214, C285, C292, and C295. Disordered regions lie at residues 1234–1263 (LDNG…PNRL) and 1281–1306 (IARA…DDDK). Residues 1247-1259 (QGERDNNNSDKKP) show a composition bias toward basic and acidic residues.

Belongs to the RNA polymerase beta' chain family. RpoC2 subfamily. As to quaternary structure, in cyanobacteria the RNAP catalytic core is composed of 2 alpha, 1 beta, 1 beta', 1 gamma and 1 omega subunit. When a sigma factor is associated with the core the holoenzyme is formed, which can initiate transcription. The cofactor is Zn(2+).

The enzyme catalyses RNA(n) + a ribonucleoside 5'-triphosphate = RNA(n+1) + diphosphate. DNA-dependent RNA polymerase catalyzes the transcription of DNA into RNA using the four ribonucleoside triphosphates as substrates. This is DNA-directed RNA polymerase subunit beta' from Crocosphaera subtropica (strain ATCC 51142 / BH68) (Cyanothece sp. (strain ATCC 51142)).